The chain runs to 105 residues: Large ribosomal subunit protein bL21 (105 aa).

Belongs to the bacterial ribosomal protein bL21 family. Part of the 50S ribosomal subunit. Contacts protein L20.

Its function is as follows. This protein binds to 23S rRNA in the presence of protein L20. This chain is Large ribosomal subunit protein bL21, found in Rhizobium etli (strain CIAT 652).